The chain runs to 534 residues: Cytochrome P450 monooxygenase CYP4 (534 aa).

Residues 46-66 (TIIFCVLMSLVGYIVSRIIWG) form a helical membrane-spanning segment. Residue Asn220 is glycosylated (N-linked (GlcNAc...) asparagine). Position 477 (Cys477) interacts with heme. Asn515 carries N-linked (GlcNAc...) asparagine glycosylation.

It belongs to the cytochrome P450 family. Requires heme as cofactor.

The protein resides in the membrane. It participates in secondary metabolite biosynthesis. Cytochrome P450 monooxygenase; part of the gene cluster that mediates the biosynthesis of a tyrosine-derived cytochalasan acting as a fungal signal recognized by resistant rice plants and leads to avirulence in Pi33 resistant rice cultivars. The first step in the pathway is catalyzed by the hybrid PKS-NRPS ACE1, assisted by the enoyl reductase RAP1, that are responsible for fusion of the tyrosine precursor and the polyketide backbone. The polyketide synthase module (PKS) of ACE1 is responsible for the synthesis of the polyketide backbone and the downstream nonribosomal peptide synthetase (NRPS) amidates the carboxyl end of the polyketide with the tyrosine precursor. Because ACE1 lacks a designated enoylreductase (ER) domain, the required activity is provided the enoyl reductase RAP1. Reduction by the hydrolyase ORFZ, followed by dehydration and intra-molecular Diels-Alder cyclization by the Diels-Alderase ORF3 then yield the required isoindolone-fused macrocycle. A number of oxidative steps catalyzed by the tailoring enzymes identified within the cluster, including cytochrome P450 monooxygenases CYP1 to CYP4, the FAD-linked oxidoreductase OXR2 and the short-chain dehydrogenase/reductase OXR1, are further required to afford the final cytochalasans that confer avirulence and which have still to be identified. The monooxygenase CYP1 has been shown to be a site-selective C-18 hydroxylase whereas the function of CYP3 is the site-selective epoxidation of the C-6/C-7 olefin that is present in some intermediate compounds. Finally, SYN2 and RAP2 are not required for avirulence in Pi33 resistant rice cultivars. In Pyricularia oryzae (strain 70-15 / ATCC MYA-4617 / FGSC 8958) (Rice blast fungus), this protein is Cytochrome P450 monooxygenase CYP4.